A 554-amino-acid polypeptide reads, in one-letter code: 2-succinyl-5-enolpyruvyl-6-hydroxy-3-cyclohexene-1-carboxylate synthase (554 aa).

Belongs to the TPP enzyme family. MenD subfamily. In terms of assembly, homodimer. Requires Mg(2+) as cofactor. It depends on Mn(2+) as a cofactor. The cofactor is thiamine diphosphate.

The catalysed reaction is isochorismate + 2-oxoglutarate + H(+) = 5-enolpyruvoyl-6-hydroxy-2-succinyl-cyclohex-3-ene-1-carboxylate + CO2. It participates in quinol/quinone metabolism; 1,4-dihydroxy-2-naphthoate biosynthesis; 1,4-dihydroxy-2-naphthoate from chorismate: step 2/7. Its pathway is quinol/quinone metabolism; menaquinone biosynthesis. Functionally, catalyzes the thiamine diphosphate-dependent decarboxylation of 2-oxoglutarate and the subsequent addition of the resulting succinic semialdehyde-thiamine pyrophosphate anion to isochorismate to yield 2-succinyl-5-enolpyruvyl-6-hydroxy-3-cyclohexene-1-carboxylate (SEPHCHC). This Lactococcus lactis subsp. cremoris (strain SK11) protein is 2-succinyl-5-enolpyruvyl-6-hydroxy-3-cyclohexene-1-carboxylate synthase.